We begin with the raw amino-acid sequence, 20 residues long: Dahlein-5.1 (20 aa).

As to expression, expressed by the skin dorsal glands.

The protein localises to the secreted. Functionally, has no antimicrobial activity. Strongly inhibits the formation of NO by neuronal nitric oxide synthase at micromolar concentrations. Acts by a non-competitive mechanism, probably by binding to calcium/calmodulin and as a consequence blocking calmodulin attachment to nNOS. The sequence is that of Dahlein-5.1 from Ranoidea dahlii (Dahl's aquatic frog).